The sequence spans 184 residues: NADH-quinone oxidoreductase subunit B (184 aa).

[4Fe-4S] cluster is bound by residues cysteine 63, cysteine 64, cysteine 128, and cysteine 158.

It belongs to the complex I 20 kDa subunit family. As to quaternary structure, NDH-1 is composed of 14 different subunits. Subunits NuoB, C, D, E, F, and G constitute the peripheral sector of the complex. It depends on [4Fe-4S] cluster as a cofactor.

It is found in the cell inner membrane. It catalyses the reaction a quinone + NADH + 5 H(+)(in) = a quinol + NAD(+) + 4 H(+)(out). Its function is as follows. NDH-1 shuttles electrons from NADH, via FMN and iron-sulfur (Fe-S) centers, to quinones in the respiratory chain. The immediate electron acceptor for the enzyme in this species is believed to be ubiquinone. Couples the redox reaction to proton translocation (for every two electrons transferred, four hydrogen ions are translocated across the cytoplasmic membrane), and thus conserves the redox energy in a proton gradient. The chain is NADH-quinone oxidoreductase subunit B from Xylella fastidiosa (strain M23).